The primary structure comprises 479 residues: MRTAPTILHLDMDAFFASVEQASKPSLRGKAVVVGGLGPRGVVATCSYEARVFGVHSAMPMGQARRLAPHAAYLVPRFELYRSISEQVMRLLRELSPLVEPLSLDEAFVDLDAGGAARDAETARLAGTKLRTDIRTVTGLTGSVGLAASKMLAKIASEAAKPDGLVLIPPGTERAMLEPMTVRTLPGVGPATGDHLRRAGITTVGEIAEAGEDELVRLLGKAHGHALYAMALARDERPVVAERETKSVSVEDTYDVDIHDRVRVGVEVGRLADRCVRRLRASGLSGRTIVLKVRRYDFSTLTRSETLRGPTDDPAVVREAAARLLDSVDTTGGVRLLGVGVSGLADYTQEDLFAQAAGDRAEEPAEEPGTEPAEAHSPSPAERRWPSGHDVRHTELGHGWVQGSGLGRVTVRFETPYSGVGRVRTFLVDDPELTPADPLPLVADTEGGAGQPSSGPLPLPASLPKSWSGGGGAAATSRP.

The UmuC domain maps to 7 to 189 (ILHLDMDAFF…MTVRTLPGVG (183 aa)). Mg(2+) is bound by residues Asp-11 and Asp-105. Glu-106 is a catalytic residue. 2 disordered regions span residues 357–400 (AGDR…GHGW) and 430–479 (DPEL…TSRP). The span at 381-396 (AERRWPSGHDVRHTEL) shows a compositional bias: basic and acidic residues.

It belongs to the DNA polymerase type-Y family. In terms of assembly, monomer. Requires Mg(2+) as cofactor.

The protein localises to the cytoplasm. It carries out the reaction DNA(n) + a 2'-deoxyribonucleoside 5'-triphosphate = DNA(n+1) + diphosphate. Its function is as follows. Poorly processive, error-prone DNA polymerase involved in untargeted mutagenesis. Copies undamaged DNA at stalled replication forks, which arise in vivo from mismatched or misaligned primer ends. These misaligned primers can be extended by PolIV. Exhibits no 3'-5' exonuclease (proofreading) activity. May be involved in translesional synthesis, in conjunction with the beta clamp from PolIII. In Streptomyces coelicolor (strain ATCC BAA-471 / A3(2) / M145), this protein is DNA polymerase IV.